The primary structure comprises 235 residues: 15,16-dihydrobiliverdin:ferredoxin oxidoreductase (235 aa).

It belongs to the HY2 family.

The catalysed reaction is 15,16-dihydrobiliverdin + oxidized 2[4Fe-4S]-[ferredoxin] = biliverdin IXalpha + reduced 2[4Fe-4S]-[ferredoxin] + 2 H(+). In terms of biological role, catalyzes the two-electron reduction of biliverdin IX-alpha at the C15 methine bridge. The polypeptide is 15,16-dihydrobiliverdin:ferredoxin oxidoreductase (Synechococcus sp. (strain CC9902)).